Reading from the N-terminus, the 245-residue chain is Geranylgeranylglyceryl phosphate synthase (245 aa).

The Mg(2+) site is built by Asp-20 and Ser-50. Sn-glycerol 1-phosphate-binding positions include 169–175 (YLEAGSG), 202–203 (GG), and 224–225 (GT).

The protein belongs to the GGGP/HepGP synthase family. Group II subfamily. It depends on Mg(2+) as a cofactor.

The protein resides in the cytoplasm. It carries out the reaction sn-glycerol 1-phosphate + (2E,6E,10E)-geranylgeranyl diphosphate = sn-3-O-(geranylgeranyl)glycerol 1-phosphate + diphosphate. It participates in membrane lipid metabolism; glycerophospholipid metabolism. In terms of biological role, prenyltransferase that catalyzes the transfer of the geranylgeranyl moiety of geranylgeranyl diphosphate (GGPP) to the C3 hydroxyl of sn-glycerol-1-phosphate (G1P). This reaction is the first ether-bond-formation step in the biosynthesis of archaeal membrane lipids. The polypeptide is Geranylgeranylglyceryl phosphate synthase (Ignicoccus hospitalis (strain KIN4/I / DSM 18386 / JCM 14125)).